Here is a 510-residue protein sequence, read N- to C-terminus: GMP synthase [glutamine-hydrolyzing] (510 aa).

The region spanning 5 to 195 (LVFIIDFGGQ…LFNICELKGD (191 aa)) is the Glutamine amidotransferase type-1 domain. Residue cysteine 82 is the Nucleophile of the active site. Catalysis depends on residues histidine 169 and glutamate 171. The GMPS ATP-PPase domain maps to 196 to 385 (WSVTSFAEEK…LGIPHKLVWR (190 aa)). 223–229 (SGGVDSS) contributes to the ATP binding site.

Homodimer.

The catalysed reaction is XMP + L-glutamine + ATP + H2O = GMP + L-glutamate + AMP + diphosphate + 2 H(+). It participates in purine metabolism; GMP biosynthesis; GMP from XMP (L-Gln route): step 1/1. Functionally, catalyzes the synthesis of GMP from XMP. The polypeptide is GMP synthase [glutamine-hydrolyzing] (Clostridium tetani (strain Massachusetts / E88)).